The sequence spans 508 residues: ATP synthase subunit alpha, chloroplastic (508 aa).

Residue 173-180 (GDRQTGKT) participates in ATP binding.

This sequence belongs to the ATPase alpha/beta chains family. As to quaternary structure, F-type ATPases have 2 components, CF(1) - the catalytic core - and CF(0) - the membrane proton channel. CF(1) has five subunits: alpha(3), beta(3), gamma(1), delta(1), epsilon(1). CF(0) has four main subunits: a, b, b' and c.

The protein localises to the plastid. It localises to the chloroplast thylakoid membrane. The catalysed reaction is ATP + H2O + 4 H(+)(in) = ADP + phosphate + 5 H(+)(out). Functionally, produces ATP from ADP in the presence of a proton gradient across the membrane. The alpha chain is a regulatory subunit. The chain is ATP synthase subunit alpha, chloroplastic from Chara vulgaris (Common stonewort).